The primary structure comprises 677 residues: MPSLDELTISTIRGLSVDAVSAANSGHPGAPLGLAPAAHVVWQKMKFNPKDPNWINRDRFVLSNGHACALLYSLLVLYKFELTVDDLKQFRQLGFKTPGHPEATDTAGVEVTTGPLGQGISNAVGIAIAQKQFAATYNKPDITLSDSYVYTFVGDGCLMEGVSSETSSLAGHLQLNNLIAFWDDNRISIDGDTAVSFTENVPDRYRAYGWNVLEVPDANTNIEAIAAAVDEAKKSTDKPTLIRLVTTIGYGSLKQGSHDVHGSPLKPDDIKQLKKSWGFKEDVDFFIPEEVSEYLAKHVSENQKVQKEWEAKLAEYKKKYPTEGAEIQRRLDGKLPEGWKEYLPKYTPADKPLATRKLSENVINALHGKIPEFIGGSADLTGSNLTRAEGSVDFQPPSTGLGNYDGVYIRYGVREHGMGAIMNGIAAFGANYKNYGGTFLNFVSYAAGALRLSALSHHPVIWVATHDSIGLGEDGPTHQPIETLAHFRAIPNLSVWRPADGNEVSAAYAAAIESTSHPSVIALTRQNLPQLEGSSIENALKGGYTLVKKDNPDVIIVSSGSEVSISVAASEELAKQGVKANVVSLPDFFTFDQQSDEYRLSVLPDGVPILSVEVMSTFGWSKYSHEQFGLNRFGASGKAADLYKYFEFTPEGIAERAQKTIKYYEGKQLLSPLDRAF.

H27 lines the substrate pocket. Thiamine diphosphate is bound by residues H66 and 114–116 (GPL). D155 lines the Mg(2+) pocket. Thiamine diphosphate-binding residues include G156 and N185. Mg(2+)-binding residues include N185 and I187. Substrate contacts are provided by H261, R356, and S383. H261 serves as a coordination point for thiamine diphosphate. Residues E415 and F442 each contribute to the thiamine diphosphate site. E415 functions as the Proton donor in the catalytic mechanism. Positions 466, 474, and 525 each coordinate substrate.

The protein belongs to the transketolase family. Homodimer. Mg(2+) is required as a cofactor. Requires Ca(2+) as cofactor. The cofactor is Mn(2+). It depends on Co(2+) as a cofactor. Thiamine diphosphate serves as cofactor.

The catalysed reaction is D-sedoheptulose 7-phosphate + D-glyceraldehyde 3-phosphate = aldehydo-D-ribose 5-phosphate + D-xylulose 5-phosphate. Functionally, catalyzes the transfer of a two-carbon ketol group from a ketose donor to an aldose acceptor, via a covalent intermediate with the cofactor thiamine pyrophosphate. This Candida albicans (Yeast) protein is Transketolase 1 (TKT1).